Reading from the N-terminus, the 147-residue chain is UPF0178 protein VS_2364 (147 aa).

This sequence belongs to the UPF0178 family.

This is UPF0178 protein VS_2364 from Vibrio atlanticus (strain LGP32) (Vibrio splendidus (strain Mel32)).